The chain runs to 572 residues: Thiamine biosynthesis protein THI22 (572 aa).

Positions 1 to 19 (MVIILLGLCTLGFPRTAFC) are cleaved as a signal peptide.

It belongs to the thiaminase-2 family.

The protein resides in the secreted. Its function is as follows. Is not required for thiamine biosynthesis. This is Thiamine biosynthesis protein THI22 (THI22) from Saccharomyces cerevisiae (strain ATCC 204508 / S288c) (Baker's yeast).